The primary structure comprises 151 residues: Superoxide dismutase [Cu-Zn] 4 (151 aa).

Cu cation-binding residues include H45, H47, and H62. A disulfide bridge connects residues C56 and C145. Positions 62, 70, 79, and 82 each coordinate Zn(2+). Position 120 (H120) interacts with Cu cation.

It belongs to the Cu-Zn superoxide dismutase family. Homodimer. Cu cation is required as a cofactor. It depends on Zn(2+) as a cofactor.

It is found in the cytoplasm. It catalyses the reaction 2 superoxide + 2 H(+) = H2O2 + O2. In terms of biological role, destroys radicals which are normally produced within the cells and which are toxic to biological systems. Protects spores from cellular damage caused by UV LIGHT. This Dictyostelium discoideum (Social amoeba) protein is Superoxide dismutase [Cu-Zn] 4 (sodD).